A 135-amino-acid chain; its full sequence is Small ribosomal subunit protein bS6 (135 aa).

The tract at residues 98–135 (EASPMAKAKDERDARRAAISERSSEADEVEENAEESAE) is disordered. Residues 104–122 (KAKDERDARRAAISERSSE) are compositionally biased toward basic and acidic residues. Positions 123 to 135 (ADEVEENAEESAE) are enriched in acidic residues.

It belongs to the bacterial ribosomal protein bS6 family.

Functionally, binds together with bS18 to 16S ribosomal RNA. In Shewanella amazonensis (strain ATCC BAA-1098 / SB2B), this protein is Small ribosomal subunit protein bS6.